We begin with the raw amino-acid sequence, 328 residues long: tRNA uridine(34) hydroxylase (328 aa).

The Rhodanese domain occupies 130–224 (LDEDTIVLDT…YGKDPEVQGE (95 aa)). The Cysteine persulfide intermediate role is filled by cysteine 184.

This sequence belongs to the TrhO family.

It catalyses the reaction uridine(34) in tRNA + AH2 + O2 = 5-hydroxyuridine(34) in tRNA + A + H2O. Its function is as follows. Catalyzes oxygen-dependent 5-hydroxyuridine (ho5U) modification at position 34 in tRNAs. The sequence is that of tRNA uridine(34) hydroxylase from Streptococcus uberis (strain ATCC BAA-854 / 0140J).